Consider the following 411-residue polypeptide: Arginine deiminase (411 aa).

The Amidino-cysteine intermediate role is filled by Cys401.

It belongs to the arginine deiminase family.

The protein localises to the cytoplasm. The catalysed reaction is L-arginine + H2O = L-citrulline + NH4(+). It participates in amino-acid degradation; L-arginine degradation via ADI pathway; carbamoyl phosphate from L-arginine: step 1/2. The polypeptide is Arginine deiminase (Staphylococcus aureus (strain JH9)).